The primary structure comprises 149 residues: Ribonuclease pancreatic (149 aa).

The first 25 residues, 1 to 25 (MGLEKSFILFSLLVLVLGWVQPSLG), serve as a signal peptide directing secretion. 2 residues coordinate substrate: Lys-32 and Arg-35. The Proton acceptor role is filled by His-37. Disulfide bonds link Cys-51/Cys-109, Cys-65/Cys-120, Cys-83/Cys-135, and Cys-90/Cys-97. Residues 66-70 (KPVNT), Lys-91, and Arg-110 each bind substrate. His-144 functions as the Proton donor in the catalytic mechanism.

Belongs to the pancreatic ribonuclease family. As to quaternary structure, monomer. Interacts with and forms tight 1:1 complexes with RNH1. Dimerization of two such complexes may occur. Interaction with RNH1 inhibits this protein. In terms of tissue distribution, pancreas.

The protein resides in the secreted. The enzyme catalyses an [RNA] containing cytidine + H2O = an [RNA]-3'-cytidine-3'-phosphate + a 5'-hydroxy-ribonucleotide-3'-[RNA].. It catalyses the reaction an [RNA] containing uridine + H2O = an [RNA]-3'-uridine-3'-phosphate + a 5'-hydroxy-ribonucleotide-3'-[RNA].. Functionally, endonuclease that catalyzes the cleavage of RNA on the 3' side of pyrimidine nucleotides. Acts on single-stranded and double-stranded RNA. In Leopoldamys edwardsi (Edwards's long-tailed giant rat), this protein is Ribonuclease pancreatic (RNASE1).